Reading from the N-terminus, the 339-residue chain is Holliday junction branch migration complex subunit RuvB (339 aa).

A large ATPase domain (RuvB-L) region spans residues 1 to 187 (MQGFEDENRI…FGVICKLDYY (187 aa)). ATP contacts are provided by residues Leu-26, Arg-27, Gly-68, Lys-71, Thr-72, Thr-73, 134–136 (EDF), Arg-177, Tyr-187, and Arg-224. Thr-72 serves as a coordination point for Mg(2+). Positions 188 to 258 (TVDELSKIVL…VAKDALELLG (71 aa)) are small ATPAse domain (RuvB-S). The interval 261-339 (SLGLDFVDEK…HLKIPYPNEK (79 aa)) is head domain (RuvB-H). DNA-binding residues include Arg-297, Arg-316, and Arg-321.

It belongs to the RuvB family. Homohexamer. Forms an RuvA(8)-RuvB(12)-Holliday junction (HJ) complex. HJ DNA is sandwiched between 2 RuvA tetramers; dsDNA enters through RuvA and exits via RuvB. An RuvB hexamer assembles on each DNA strand where it exits the tetramer. Each RuvB hexamer is contacted by two RuvA subunits (via domain III) on 2 adjacent RuvB subunits; this complex drives branch migration. In the full resolvosome a probable DNA-RuvA(4)-RuvB(12)-RuvC(2) complex forms which resolves the HJ.

Its subcellular location is the cytoplasm. It carries out the reaction ATP + H2O = ADP + phosphate + H(+). In terms of biological role, the RuvA-RuvB-RuvC complex processes Holliday junction (HJ) DNA during genetic recombination and DNA repair, while the RuvA-RuvB complex plays an important role in the rescue of blocked DNA replication forks via replication fork reversal (RFR). RuvA specifically binds to HJ cruciform DNA, conferring on it an open structure. The RuvB hexamer acts as an ATP-dependent pump, pulling dsDNA into and through the RuvAB complex. RuvB forms 2 homohexamers on either side of HJ DNA bound by 1 or 2 RuvA tetramers; 4 subunits per hexamer contact DNA at a time. Coordinated motions by a converter formed by DNA-disengaged RuvB subunits stimulates ATP hydrolysis and nucleotide exchange. Immobilization of the converter enables RuvB to convert the ATP-contained energy into a lever motion, pulling 2 nucleotides of DNA out of the RuvA tetramer per ATP hydrolyzed, thus driving DNA branch migration. The RuvB motors rotate together with the DNA substrate, which together with the progressing nucleotide cycle form the mechanistic basis for DNA recombination by continuous HJ branch migration. Branch migration allows RuvC to scan DNA until it finds its consensus sequence, where it cleaves and resolves cruciform DNA. This Clostridioides difficile (strain 630) (Peptoclostridium difficile) protein is Holliday junction branch migration complex subunit RuvB.